Here is a 334-residue protein sequence, read N- to C-terminus: Nucleoid-associated protein YpsIP31758_2721 (334 aa).

It belongs to the YejK family.

Its subcellular location is the cytoplasm. It is found in the nucleoid. The protein is Nucleoid-associated protein YpsIP31758_2721 of Yersinia pseudotuberculosis serotype O:1b (strain IP 31758).